Consider the following 357-residue polypeptide: Pheromone receptor 1 (357 aa).

A run of 7 helical transmembrane segments spans residues 5–25 (ITPF…AWHI), 32–52 (LIML…NSMV), 67–90 (LSVR…ARKL), 110–130 (VIID…LMIV), 145–165 (WPMM…VIVV), 206–226 (LLLL…GTIA), and 268–288 (LILA…MFGL). Residues 338–357 (ANTSTKSEKSDIDMRGSEAA) form a disordered region. Over residues 343 to 357 (KSEKSDIDMRGSEAA) the composition is skewed to basic and acidic residues.

It belongs to the G-protein coupled receptor 4 family.

The protein localises to the membrane. Receptor for the A2 pheromone, a prenylated mating factor. In Mycosarcoma maydis (Corn smut fungus), this protein is Pheromone receptor 1 (PRA1).